Reading from the N-terminus, the 228-residue chain is Cytochrome c oxidase subunit 2 (228 aa).

Residues 1-26 (MSTWANLGLQDSASPLMEQLIFFHDH) lie on the Mitochondrial intermembrane side of the membrane. The chain crosses the membrane as a helical span at residues 27–48 (ALLILVMITVLVGYLMFMLFFN). Topologically, residues 49 to 62 (NYVNRFLLHGQLIE) are mitochondrial matrix. Residues 63–82 (MIWTILPAIILLFIALPSLR) form a helical membrane-spanning segment. Residues 83–228 (LLYLLDEINE…FIKWISSNNS (146 aa)) lie on the Mitochondrial intermembrane side of the membrane. Residues His161, Cys196, Glu198, Cys200, His204, and Met207 each coordinate Cu cation. Glu198 provides a ligand contact to Mg(2+).

The protein belongs to the cytochrome c oxidase subunit 2 family. In terms of assembly, component of the cytochrome c oxidase (complex IV, CIV), a multisubunit enzyme composed of a catalytic core of 3 subunits and several supernumerary subunits. The complex exists as a monomer or a dimer and forms supercomplexes (SCs) in the inner mitochondrial membrane with ubiquinol-cytochrome c oxidoreductase (cytochrome b-c1 complex, complex III, CIII). The cofactor is Cu cation.

Its subcellular location is the mitochondrion inner membrane. It catalyses the reaction 4 Fe(II)-[cytochrome c] + O2 + 8 H(+)(in) = 4 Fe(III)-[cytochrome c] + 2 H2O + 4 H(+)(out). Functionally, component of the cytochrome c oxidase, the last enzyme in the mitochondrial electron transport chain which drives oxidative phosphorylation. The respiratory chain contains 3 multisubunit complexes succinate dehydrogenase (complex II, CII), ubiquinol-cytochrome c oxidoreductase (cytochrome b-c1 complex, complex III, CIII) and cytochrome c oxidase (complex IV, CIV), that cooperate to transfer electrons derived from NADH and succinate to molecular oxygen, creating an electrochemical gradient over the inner membrane that drives transmembrane transport and the ATP synthase. Cytochrome c oxidase is the component of the respiratory chain that catalyzes the reduction of oxygen to water. Electrons originating from reduced cytochrome c in the intermembrane space (IMS) are transferred via the dinuclear copper A center (CU(A)) of subunit 2 and heme A of subunit 1 to the active site in subunit 1, a binuclear center (BNC) formed by heme A3 and copper B (CU(B)). The BNC reduces molecular oxygen to 2 water molecules using 4 electrons from cytochrome c in the IMS and 4 protons from the mitochondrial matrix. The protein is Cytochrome c oxidase subunit 2 (mt:CoII) of Drosophila simulans (Fruit fly).